The chain runs to 85 residues: UPF0386 protein TM1040_0419 (85 aa).

The segment at 62–85 is disordered; sequence SKSSRPYQISEKGRRSVRAQLDNR.

The protein belongs to the UPF0386 family.

This is UPF0386 protein TM1040_0419 from Ruegeria sp. (strain TM1040) (Silicibacter sp.).